The primary structure comprises 492 residues: N-succinylglutamate 5-semialdehyde dehydrogenase (492 aa).

220-225 (GSASTG) contributes to the NAD(+) binding site. Catalysis depends on residues Glu-243 and Cys-277.

Belongs to the aldehyde dehydrogenase family. AstD subfamily.

It catalyses the reaction N-succinyl-L-glutamate 5-semialdehyde + NAD(+) + H2O = N-succinyl-L-glutamate + NADH + 2 H(+). It participates in amino-acid degradation; L-arginine degradation via AST pathway; L-glutamate and succinate from L-arginine: step 4/5. In terms of biological role, catalyzes the NAD-dependent reduction of succinylglutamate semialdehyde into succinylglutamate. This is N-succinylglutamate 5-semialdehyde dehydrogenase from Salmonella paratyphi B (strain ATCC BAA-1250 / SPB7).